A 151-amino-acid chain; its full sequence is Protein archease-like (151 aa).

Positions 20, 150, and 151 each coordinate Ca(2+).

It belongs to the archease family.

In terms of biological role, component of the tRNA-splicing ligase complex required to facilitate the enzymatic turnover of catalytic subunit RtcB. This is Protein archease-like from Dictyostelium discoideum (Social amoeba).